We begin with the raw amino-acid sequence, 184 residues long: Structural protein V8 (184 aa).

Residues 14–35 are disordered; sequence IYNKSNTLTNTPSNPTGNTNTL.

This sequence belongs to the sputnik virus V6 family.

The protein resides in the virion. In Sputnik virophage, this protein is Structural protein V8.